Reading from the N-terminus, the 99-residue chain is Transmembrane protein 14A (99 aa).

3 helical membrane passes run 1 to 21 (MDLI…LGYK), 24 to 44 (GGVL…YGAY), and 79 to 99 (PAGL…LLLL).

It belongs to the TMEM14 family.

The protein resides in the mitochondrion membrane. The protein localises to the endoplasmic reticulum membrane. Functionally, inhibits apoptosis via negative regulation of the mitochondrial outer membrane permeabilization involved in apoptotic signaling pathway. The polypeptide is Transmembrane protein 14A (TMEM14A) (Bos taurus (Bovine)).